The sequence spans 284 residues: Bifunctional protein FolD (284 aa).

NADP(+) is bound by residues 166-168 and Ile-232; that span reads GAS.

The protein belongs to the tetrahydrofolate dehydrogenase/cyclohydrolase family. As to quaternary structure, homodimer.

It catalyses the reaction (6R)-5,10-methylene-5,6,7,8-tetrahydrofolate + NADP(+) = (6R)-5,10-methenyltetrahydrofolate + NADPH. The catalysed reaction is (6R)-5,10-methenyltetrahydrofolate + H2O = (6R)-10-formyltetrahydrofolate + H(+). It participates in one-carbon metabolism; tetrahydrofolate interconversion. Catalyzes the oxidation of 5,10-methylenetetrahydrofolate to 5,10-methenyltetrahydrofolate and then the hydrolysis of 5,10-methenyltetrahydrofolate to 10-formyltetrahydrofolate. The sequence is that of Bifunctional protein FolD from Shewanella oneidensis (strain ATCC 700550 / JCM 31522 / CIP 106686 / LMG 19005 / NCIMB 14063 / MR-1).